A 307-amino-acid chain; its full sequence is Nicotinamide/nicotinic acid mononucleotide adenylyltransferase 2 (307 aa).

Residues Ser16 and Phe17 each coordinate NAD(+). Position 24 (His24) interacts with ATP. Residues Trp92, Thr95, Gly200, Asp202, Leu212, Trp213, and Arg232 each coordinate NAD(+). Position 271 to 274 (271 to 274 (TKSR)) interacts with ATP.

Belongs to the eukaryotic NMN adenylyltransferase family. In terms of assembly, monomer. Mg(2+) is required as a cofactor.

It localises to the golgi apparatus membrane. Its subcellular location is the cytoplasmic vesicle membrane. It is found in the cytoplasm. The protein resides in the cell projection. The protein localises to the axon. It catalyses the reaction beta-nicotinamide D-ribonucleotide + ATP + H(+) = diphosphate + NAD(+). It carries out the reaction nicotinate beta-D-ribonucleotide + ATP + H(+) = deamido-NAD(+) + diphosphate. It participates in cofactor biosynthesis; NAD(+) biosynthesis; NAD(+) from nicotinamide D-ribonucleotide: step 1/1. Its pathway is cofactor biosynthesis; NAD(+) biosynthesis; deamido-NAD(+) from nicotinate D-ribonucleotide: step 1/1. Nicotinamide/nicotinate-nucleotide adenylyltransferase that acts as an axon maintenance factor. Axon survival factor required for the maintenance of healthy axons: acts by delaying Wallerian axon degeneration, an evolutionarily conserved process that drives the loss of damaged axons. Catalyzes the formation of NAD(+) from nicotinamide mononucleotide (NMN) and ATP. Can also use the deamidated form; nicotinic acid mononucleotide (NaMN) as substrate but with a lower efficiency. Also catalyzes the reverse reaction, i.e. the pyrophosphorolytic cleavage of NAD(+). For the pyrophosphorolytic activity prefers NAD(+), NADH and NaAD as substrates and degrades nicotinic acid adenine dinucleotide phosphate (NHD) less effectively. Also acts as an activator of ADP-ribosylation by supporting the catalytic activity of PARP16 and promoting mono-ADP-ribosylation of ribosomes by PARP16. May be involved in the maintenance of axonal integrity. The protein is Nicotinamide/nicotinic acid mononucleotide adenylyltransferase 2 (nmnat2) of Xenopus tropicalis (Western clawed frog).